Here is a 1022-residue protein sequence, read N- to C-terminus: Dihydropyrimidine dehydrogenase [NADP(+)] (1022 aa).

Residues 26–45 (ANVHSTASKKNEKKHWKRNP) are disordered. The 4Fe-4S ferredoxin-type 1 domain maps to 69-100 (ERGALREALRCLKCADAPCQKSCPTNLDIKSF). C79, C82, C87, and C91 together coordinate [4Fe-4S] cluster. V129 contributes to the FAD binding site. Positions 130, 136, 140, and 156 each coordinate [4Fe-4S] cluster. Residues 194–198 (GCGPA), 218–226 (EKQKYIGGL), R235, and L261 contribute to the FAD site. Residues 340 to 343 (AGDT), 364 to 365 (RK), R371, 437 to 439 (AFG), and 481 to 487 (DIAGFAN) contribute to the NADP(+) site. An FAD-binding site is contributed by 480-489 (GDIAGFANTT). Residues S550 and 574-575 (KT) each bind FMN. Substrate-binding positions include N609 and 668 to 670 (NLS). The Proton acceptor role is filled by C671. FMN is bound at residue K709. 736 to 737 (NT) serves as a coordination point for substrate. Residues G767, 793 to 795 (TGG), and 816 to 817 (CS) contribute to the FMN site. 4Fe-4S ferredoxin-type domains are found at residues 943 to 975 (VQAL…FDPE) and 976 to 1006 (THLP…MVSR). C952, C955, C958, C962, C985, C988, C991, and C995 together coordinate [4Fe-4S] cluster.

Belongs to the dihydropyrimidine dehydrogenase family. Homodimer. FAD serves as cofactor. The cofactor is FMN. [4Fe-4S] cluster is required as a cofactor.

The protein resides in the cytoplasm. The catalysed reaction is 5,6-dihydrouracil + NADP(+) = uracil + NADPH + H(+). It carries out the reaction 5,6-dihydrothymine + NADP(+) = thymine + NADPH + H(+). The protein operates within amino-acid biosynthesis; beta-alanine biosynthesis. Involved in pyrimidine base degradation. Catalyzes the reduction of uracil and thymine. Also involved the degradation of the chemotherapeutic drug 5-fluorouracil. The polypeptide is Dihydropyrimidine dehydrogenase [NADP(+)] (dpyd) (Danio rerio (Zebrafish)).